A 745-amino-acid polypeptide reads, in one-letter code: TonB-dependent heme receptor A (745 aa).

A signal peptide spans 1-24; sequence MNILINKRIFLLVTLVGIQLNVTA. Residues 45–157 form the TBDR plug domain; sequence DDSNKLPGRS…FAGTVKFETK (113 aa). The TBDR beta-barrel domain occupies 168–745; sequence KIGGFLKYGN…NIKFSLSQKF (578 aa).

The protein belongs to the TonB-dependent receptor family.

It is found in the cell outer membrane. Functionally, heme receptor. The chain is TonB-dependent heme receptor A (tdhA) from Haemophilus influenzae (strain 86-028NP).